The primary structure comprises 147 residues: Heavy metal-associated isoprenylated plant protein 27 (147 aa).

Positions 18–82 (FQKVEIKVKM…VMHRTGKKAE (65 aa)) constitute an HMA domain. A metal cation contacts are provided by C29 and C32. Residue C144 is modified to Cysteine methyl ester. The S-farnesyl cysteine moiety is linked to residue C144. Positions 145 to 147 (TIM) are cleaved as a propeptide — removed in mature form.

The protein belongs to the HIPP family. Interacts with UBP16. Interacts with ZHD11/HB29.

The protein localises to the membrane. Functionally, heavy-metal-binding protein. Binds cadmium. May be involved in cadmium transport and play a role in cadmium detoxification. The polypeptide is Heavy metal-associated isoprenylated plant protein 27 (Arabidopsis thaliana (Mouse-ear cress)).